Here is a 262-residue protein sequence, read N- to C-terminus: Apolipoprotein A-I (262 aa).

An N-terminal signal peptide occupies residues 1-18; sequence MKAVVLTLAVLFLTGSQA. A run of 2 repeats spans residues 67-88 and 89-110. Residues 67 to 262 form a 10 X approximate tandem repeats region; sequence LKLLDNWDTL…DEASKKLNAQ (196 aa). M109 carries the methionine sulfoxide modification. One copy of the 3; half-length repeat lies at 111-121; that stretch reads KDLEEVKQKVQ. 5 repeat units span residues 122–142, 144–165, 166–184, 185–206, and 207–227. A 9; half-length repeat occupies 228-238; sequence PALEDLRQGLM. Position 238 is a methionine sulfoxide (M238). Copy 10 of the repeat occupies 239 to 262; it reads PVLESLKVSILAAIDEASKKLNAQ.

This sequence belongs to the apolipoprotein A1/A4/E family. Homodimer. Interacts with APOA1BP and CLU. Component of a sperm activating protein complex (SPAP), consisting of APOA1, an immunoglobulin heavy chain, an immunoglobulin light chain and albumin. Interacts with NDRG1. Interacts with SCGB3A2. Interacts with NAXE and YJEFN3. In terms of processing, glycosylated. Post-translationally, palmitoylated. Phosphorylation sites are present in the extracellular medium. In terms of tissue distribution, major protein of plasma HDL, also found in chylomicrons.

Its subcellular location is the secreted. Its function is as follows. Participates in the reverse transport of cholesterol from tissues to the liver for excretion by promoting cholesterol efflux from tissues and by acting as a cofactor for the lecithin cholesterol acyltransferase (LCAT). As part of the SPAP complex, activates spermatozoa motility. The chain is Apolipoprotein A-I (APOA1) from Pantholops hodgsonii (Chiru).